The sequence spans 204 residues: Glycerol-3-phosphate acyltransferase (204 aa).

A run of 5 helical transmembrane segments spans residues methionine 8–phenylalanine 28, valine 53–alanine 73, phenylalanine 81–glycine 101, phenylalanine 116–isoleucine 136, and valine 155–leucine 175.

It belongs to the PlsY family. In terms of assembly, probably interacts with PlsX.

Its subcellular location is the cell inner membrane. The catalysed reaction is an acyl phosphate + sn-glycerol 3-phosphate = a 1-acyl-sn-glycero-3-phosphate + phosphate. Its pathway is lipid metabolism; phospholipid metabolism. Catalyzes the transfer of an acyl group from acyl-phosphate (acyl-PO(4)) to glycerol-3-phosphate (G3P) to form lysophosphatidic acid (LPA). This enzyme utilizes acyl-phosphate as fatty acyl donor, but not acyl-CoA or acyl-ACP. The sequence is that of Glycerol-3-phosphate acyltransferase from Francisella philomiragia subsp. philomiragia (strain ATCC 25017 / CCUG 19701 / FSC 153 / O#319-036).